A 602-amino-acid polypeptide reads, in one-letter code: Elongation factor 4 (602 aa).

One can recognise a tr-type G domain in the interval 7 to 189 (SKIRNFCIIA…AIVRRVPPPQ (183 aa)). Residues 19-24 (DHGKST) and 136-139 (NKVD) contribute to the GTP site.

This sequence belongs to the TRAFAC class translation factor GTPase superfamily. Classic translation factor GTPase family. LepA subfamily.

Its subcellular location is the cell inner membrane. It carries out the reaction GTP + H2O = GDP + phosphate + H(+). In terms of biological role, required for accurate and efficient protein synthesis under certain stress conditions. May act as a fidelity factor of the translation reaction, by catalyzing a one-codon backward translocation of tRNAs on improperly translocated ribosomes. Back-translocation proceeds from a post-translocation (POST) complex to a pre-translocation (PRE) complex, thus giving elongation factor G a second chance to translocate the tRNAs correctly. Binds to ribosomes in a GTP-dependent manner. The protein is Elongation factor 4 of Prochlorococcus marinus (strain MIT 9215).